An 81-amino-acid chain; its full sequence is Large ribosomal subunit protein bL31 (81 aa).

Positions 16, 18, 38, and 41 each coordinate Zn(2+).

It belongs to the bacterial ribosomal protein bL31 family. Type A subfamily. In terms of assembly, part of the 50S ribosomal subunit. It depends on Zn(2+) as a cofactor.

In terms of biological role, binds the 23S rRNA. This chain is Large ribosomal subunit protein bL31, found in Mycobacterium sp. (strain JLS).